Consider the following 693-residue polypeptide: Elongation factor G (693 aa).

The tr-type G domain occupies 8-282 (EKTRNIGIMA…AVIDYLPSPL (275 aa)). GTP-binding positions include 17-24 (AHVDAGKT), 81-85 (DTPGH), and 135-138 (NKMD).

The protein belongs to the TRAFAC class translation factor GTPase superfamily. Classic translation factor GTPase family. EF-G/EF-2 subfamily.

It is found in the cytoplasm. In terms of biological role, catalyzes the GTP-dependent ribosomal translocation step during translation elongation. During this step, the ribosome changes from the pre-translocational (PRE) to the post-translocational (POST) state as the newly formed A-site-bound peptidyl-tRNA and P-site-bound deacylated tRNA move to the P and E sites, respectively. Catalyzes the coordinated movement of the two tRNA molecules, the mRNA and conformational changes in the ribosome. This is Elongation factor G from Streptococcus suis (strain 05ZYH33).